Here is a 430-residue protein sequence, read N- to C-terminus: Methylthioribose kinase 1 (430 aa).

Residues 52 to 56 (DGNLN), lysine 71, and 125 to 127 (RYI) each bind ATP. Asparagine 56 serves as a coordination point for substrate. Aspartate 246 contacts substrate. ATP is bound at residue 263–265 (DPE). Residue arginine 373 participates in substrate binding.

The protein belongs to the methylthioribose kinase family. In terms of assembly, homodimer.

The enzyme catalyses 5-(methylsulfanyl)-D-ribose + ATP = 5-(methylsulfanyl)-alpha-D-ribose 1-phosphate + ADP + H(+). The protein operates within amino-acid biosynthesis; L-methionine biosynthesis via salvage pathway; S-methyl-5-thio-alpha-D-ribose 1-phosphate from S-methyl-5'-thioadenosine (hydrolase route): step 2/2. Catalyzes the phosphorylation of methylthioribose into methylthioribose-1-phosphate. This Oryza sativa subsp. japonica (Rice) protein is Methylthioribose kinase 1.